Here is a 96-residue protein sequence, read N- to C-terminus: Large ribosomal subunit protein bL28 (96 aa).

The interval Met1–Asn23 is disordered.

Belongs to the bacterial ribosomal protein bL28 family.

The polypeptide is Large ribosomal subunit protein bL28 (Cereibacter sphaeroides (strain ATCC 17029 / ATH 2.4.9) (Rhodobacter sphaeroides)).